The primary structure comprises 219 residues: Transcription factor MYB23 (219 aa).

HTH myb-type domains lie at 9–61 (EHEY…MNYL) and 62–116 (SPNV…SKKL). DNA-binding regions (H-T-H motif) lie at residues 37–61 (WNRI…MNYL) and 89–112 (WSLI…NTHL).

As to quaternary structure, interacts with BHLH2/EGL3/MYC146, BHLH12/MYC1 and GL3. In terms of tissue distribution, expressed in roots, seed coats, leaves, stems and flowers. Detected specifically in trichomes, and in the cell division and differentiation zone of the root.

It is found in the nucleus. Functionally, transcription activator, when associated with BHLH2/EGL3/MYC146 or BHLH12/MYC1. Regulates the epidermal cell fate specification. Mediates the formation of columellae and accumulation of mucilages on seed coats. Controls the elongation of epidermal cells positively in roots but negatively in stems, leading to the promotion of primary roots elongation and repression of leaves and stems elongation, respectively. Ovoids ectopic root-hair formation, probably by inducing GL2 in roots. Controls trichome initiation and branching. This Arabidopsis thaliana (Mouse-ear cress) protein is Transcription factor MYB23 (MYB23).